A 244-amino-acid chain; its full sequence is NAD-dependent protein deacetylase (244 aa).

The Deacetylase sirtuin-type domain occupies 1 to 244; sequence MTGEQLAHWI…LSAVQRAVMP (244 aa). NAD(+) is bound by residues A22, T26, F33, R34, Q103, I105, D106, and H121. F33 contacts nicotinamide. Residues I105 and D106 each coordinate nicotinamide. Catalysis depends on H121, which acts as the Proton acceptor. The Zn(2+) site is built by C129, C132, C150, and C152. NAD(+) contacts are provided by T190, S191, N213, and L231.

This sequence belongs to the sirtuin family. Class U subfamily. The cofactor is Zn(2+).

The protein localises to the cytoplasm. It catalyses the reaction N(6)-acetyl-L-lysyl-[protein] + NAD(+) + H2O = 2''-O-acetyl-ADP-D-ribose + nicotinamide + L-lysyl-[protein]. Functionally, NAD-dependent protein deacetylase which modulates the activities of several enzymes which are inactive in their acetylated form. In Cutibacterium acnes (strain DSM 16379 / KPA171202) (Propionibacterium acnes), this protein is NAD-dependent protein deacetylase.